The chain runs to 381 residues: MARTDEIIARTAPGHLNDHNLIDREVESLCDGMVKYEKRPAKRHDGSVAEGIYNAWIILDNPKQYNSYTTDMVKAIILAFRRASVDRSVNAVVFTGVGDKAFCTGGNTKEYAEYYAGNPQEYRQYMRLFNDMVSAILGCDKAVISRVNGMRIGGGQEIGMACDFSIAQDLANFGQAGPKHGSAAIGGATDFLPLMVGCEQAMVSGTLCEPFSAHKAARLGIICDVVPALKVGGKFVANPTVVTDRYLDEYGRVVHGEFKAGAAFKEGQGQIKEGEIDLSLLDEKVESLCTKLLETFPECMTKSLEELRKPKLHAWNLNKENSRAWLALNMMNEARTGFRAFNEGTKETGREIDFVKLRQGLAKGTPWTEELIESLMPTAQK.

It belongs to the enoyl-CoA hydratase/isomerase family. In terms of assembly, homohexamer.

The catalysed reaction is 6-oxocyclohex-1-ene-1-carbonyl-CoA + 2 H2O = 3-hydroxy-6-carboxyhexanoyl-CoA + H(+). The protein operates within aromatic compound metabolism; benzoyl-CoA degradation. Functionally, involved in the central benzoyl-CoA catabolism. Catalyzes the addition of one molecule of water to the double bond and the hydrolytic cleavage of C-C bond in the alicyclic ring, 6-oxocyclohex-1-ene-1-carbonyl-CoA (6-OCH-CoA) to yield 3-hydroxypimelyl-CoA. The protein is 6-oxocyclohex-1-ene-1-carbonyl-CoA hydrolase of Geobacter metallireducens (strain ATCC 53774 / DSM 7210 / GS-15).